A 186-amino-acid chain; its full sequence is Elongation factor P (186 aa).

It belongs to the elongation factor P family.

It localises to the cytoplasm. The protein operates within protein biosynthesis; polypeptide chain elongation. Functionally, involved in peptide bond synthesis. Stimulates efficient translation and peptide-bond synthesis on native or reconstituted 70S ribosomes in vitro. Probably functions indirectly by altering the affinity of the ribosome for aminoacyl-tRNA, thus increasing their reactivity as acceptors for peptidyl transferase. The chain is Elongation factor P from Synechococcus sp. (strain RCC307).